The following is a 199-amino-acid chain: uncharacterized protein (199 aa).

6 helical membrane-spanning segments follow: residues 1–21 (MEQF…TFIF), 28–48 (IAVS…IALY), 51–71 (LNAA…YLGM), 83–103 (LVAA…WFII), 127–147 (QLVL…FVIQ), and 154–174 (AVGG…LFGI).

It is found in the cell membrane. This is an uncharacterized protein from Bacillus subtilis (strain 168).